The following is a 192-amino-acid chain: NADH-quinone oxidoreductase subunit C (192 aa).

A disordered region spans residues 170–192 (LGGIPVEYKGATVPPPDERRQYA).

Belongs to the complex I 30 kDa subunit family. NDH-1 is composed of 14 different subunits. Subunits NuoB, C, D, E, F, and G constitute the peripheral sector of the complex.

The protein resides in the cell membrane. It carries out the reaction a quinone + NADH + 5 H(+)(in) = a quinol + NAD(+) + 4 H(+)(out). Functionally, NDH-1 shuttles electrons from NADH, via FMN and iron-sulfur (Fe-S) centers, to quinones in the respiratory chain. The immediate electron acceptor for the enzyme in this species is believed to be a menaquinone. Couples the redox reaction to proton translocation (for every two electrons transferred, four hydrogen ions are translocated across the cytoplasmic membrane), and thus conserves the redox energy in a proton gradient. The polypeptide is NADH-quinone oxidoreductase subunit C (Acidothermus cellulolyticus (strain ATCC 43068 / DSM 8971 / 11B)).